We begin with the raw amino-acid sequence, 333 residues long: Phosphate acyltransferase (333 aa).

This sequence belongs to the PlsX family. Homodimer. Probably interacts with PlsY.

The protein resides in the cytoplasm. The catalysed reaction is a fatty acyl-[ACP] + phosphate = an acyl phosphate + holo-[ACP]. Its pathway is lipid metabolism; phospholipid metabolism. Functionally, catalyzes the reversible formation of acyl-phosphate (acyl-PO(4)) from acyl-[acyl-carrier-protein] (acyl-ACP). This enzyme utilizes acyl-ACP as fatty acyl donor, but not acyl-CoA. The polypeptide is Phosphate acyltransferase (Thermoanaerobacterium thermosaccharolyticum (strain ATCC 7956 / DSM 571 / NCIMB 9385 / NCA 3814 / NCTC 13789 / WDCM 00135 / 2032) (Clostridium thermosaccharolyticum)).